The sequence spans 323 residues: Methionyl-tRNA formyltransferase (323 aa).

117–120 lines the (6S)-5,6,7,8-tetrahydrofolate pocket; it reads SLLP.

Belongs to the Fmt family.

It carries out the reaction L-methionyl-tRNA(fMet) + (6R)-10-formyltetrahydrofolate = N-formyl-L-methionyl-tRNA(fMet) + (6S)-5,6,7,8-tetrahydrofolate + H(+). Its function is as follows. Attaches a formyl group to the free amino group of methionyl-tRNA(fMet). The formyl group appears to play a dual role in the initiator identity of N-formylmethionyl-tRNA by promoting its recognition by IF2 and preventing the misappropriation of this tRNA by the elongation apparatus. This Acidovorax ebreus (strain TPSY) (Diaphorobacter sp. (strain TPSY)) protein is Methionyl-tRNA formyltransferase.